Consider the following 584-residue polypeptide: Kelch domain-containing protein 4 (584 aa).

Residues 1-10 (MGKKGKKEKK) are compositionally biased toward basic residues. 2 disordered regions span residues 1-33 (MGKK…RKEE) and 50-69 (KTQV…NASL). The segment covering 11 to 24 (GRGAEKTAAKMEKK) has biased composition (basic and acidic residues). Kelch repeat units lie at residues 77-129 (ELIL…VVPQ), 133-187 (QLWV…AWKR), 188-238 (QLIL…LMAV), 243-289 (SIAI…INPS), and 308-361 (QILV…RRGK). Disordered stretches follow at residues 348–381 (KGPK…APEP), 405–433 (SGLG…CPRS), and 482–533 (PKSQ…EQFE). S418 bears the Phosphoserine mark. A Kelch 6 repeat occupies 443 to 494 (LLYVYGGMFEAGDRQVTLSDLYCLDLHKMEEWKTLVEMDPKSQEWLEESDSE). A compositionally biased stretch (acidic residues) spans 487-519 (WLEESDSEEDSSSDEESEDGEDKDQEDSAEEGA). Residues 520 to 533 (DPQHPEVARGEQFE) show a composition bias toward basic and acidic residues.

The sequence is that of Kelch domain-containing protein 4 (Klhdc4) from Mus musculus (Mouse).